Consider the following 357-residue polypeptide: Phenylalanine--tRNA ligase alpha subunit (357 aa).

Residue E278 coordinates Mg(2+).

This sequence belongs to the class-II aminoacyl-tRNA synthetase family. Phe-tRNA synthetase alpha subunit type 1 subfamily. As to quaternary structure, tetramer of two alpha and two beta subunits. It depends on Mg(2+) as a cofactor.

The protein resides in the cytoplasm. The catalysed reaction is tRNA(Phe) + L-phenylalanine + ATP = L-phenylalanyl-tRNA(Phe) + AMP + diphosphate + H(+). This chain is Phenylalanine--tRNA ligase alpha subunit, found in Albidiferax ferrireducens (strain ATCC BAA-621 / DSM 15236 / T118) (Rhodoferax ferrireducens).